The primary structure comprises 132 residues: Small integral membrane protein 33 (132 aa).

The disordered stretch occupies residues 1–28; the sequence is MHQAGHYSWPSPAVNSSSEQEPQRQLPE. Asn-15 carries an N-linked (GlcNAc...) asparagine glycan. Residues 43–63 form a helical membrane-spanning segment; it reads PVVTVIVAVFVLLAVCIIVAV. Positions 99-132 are disordered; sequence PQDSPEEAPPGPLVPGSCPAPDGPRPSIDEVTCL.

It localises to the membrane. This chain is Small integral membrane protein 33, found in Homo sapiens (Human).